The chain runs to 84 residues: GTP cyclohydrolase 1 feedback regulatory protein (84 aa).

The protein belongs to the GFRP family. As to quaternary structure, homopentamer. Forms a complex with GCH1 where a GCH1 homodecamer is sandwiched by two GFRP homopentamers.

It localises to the nucleus. The protein resides in the nucleus membrane. Its subcellular location is the cytoplasm. It is found in the cytosol. Its function is as follows. Mediates tetrahydrobiopterin inhibition of GTP cyclohydrolase 1. This Xenopus tropicalis (Western clawed frog) protein is GTP cyclohydrolase 1 feedback regulatory protein (gchfr).